A 212-amino-acid polypeptide reads, in one-letter code: Redox-sensing transcriptional repressor Rex (212 aa).

A DNA-binding region (H-T-H motif) is located at residues 17–56 (LYARSLRYLLEEGVHSVSSQELGERINVTAAQIRKDLSYF). Residue 91 to 96 (GIGLLG) participates in NAD(+) binding.

Belongs to the transcriptional regulatory Rex family. Homodimer.

Its subcellular location is the cytoplasm. Its function is as follows. Modulates transcription in response to changes in cellular NADH/NAD(+) redox state. In Chloroflexus aurantiacus (strain ATCC 29366 / DSM 635 / J-10-fl), this protein is Redox-sensing transcriptional repressor Rex.